Reading from the N-terminus, the 398-residue chain is Stimulator of interferon genes protein (398 aa).

Over 1–16 (MSVMGEDALVPRARSR) the chain is Cytoplasmic. The chain crosses the membrane as a helical span at residues 17 to 37 (LPVMCAAGLGFLTLAVAWLLD). The Lumenal segment spans residues 38 to 44 (SDKFSER). Residues 45–65 (AGIIAFGLMLERFIYCICLLA) traverse the membrane as a helical segment. Topologically, residues 66 to 91 (EELLFHSRQRYHGRMSEIFRACFRGS) are cytoplasmic. The helical transmembrane segment at 92 to 112 (GILGMCAIFLMLMLGGVSFSV) threads the bilayer. Residues 113 to 120 (KQWSHFNL) are Lumenal-facing. Residues 121–141 (MCAGYMLLNSLGVLGPAPVEI) form a helical membrane-spanning segment. The Cytoplasmic segment spans residues 142-398 (SEICEAKKMN…FNPSSAMKQN (257 aa)). A cyclic dinucleotide-binding domain (CBD) region spans residues 150 to 331 (MNVAHGLAWS…QNLKQQDGEI (182 aa)). 2',3'-cGAMP is bound by residues Ser-159, Tyr-164, Arg-230, and Thr-254. Residues Ser-159, Tyr-164, 230-233 (RSYT), and Thr-254 each bind 3',3'-c-di-GMP. Residues 375–398 (PQSLRSEPVETTDYFNPSSAMKQN) form a disordered region. Residues 387 to 398 (DYFNPSSAMKQN) show a composition bias toward polar residues.

Belongs to the STING family. As to quaternary structure, homodimer; forms a homodimer in absence of cyclic nucleotide (c-di-GMP or cGAMP). Homotetramer; in presence of cyclic nucleotide (c-di-GMP or cGAMP), forms tetramers and higher-order oligomers through side-by-side packing. Interacts (when phosphorylated) with irf3; following activation and phosphorylation by tbk1, recruits irf3. Phosphorylation by TBK1 leads to activation and production of IFN-beta. Following cyclic nucleotide (c-di-GMP or cGAMP)-binding, activation and translocation from the endoplasmic reticulum, STING1 is phosphorylated by tbk1, leading to recruitment of the transcription factor irf3 to induce type-I interferons and other cytokines.

The protein localises to the endoplasmic reticulum membrane. Its subcellular location is the cytoplasm. It is found in the perinuclear region. The protein resides in the endoplasmic reticulum-Golgi intermediate compartment membrane. It localises to the golgi apparatus membrane. The protein localises to the cytoplasmic vesicle. Its subcellular location is the autophagosome membrane. It catalyses the reaction H(+)(in) = H(+)(out). Facilitator of innate immune signaling that acts as a sensor of cytosolic DNA from bacteria and viruses and promotes the production of type I interferon (IFN-alpha and IFN-beta). Innate immune response is triggered in response to non-CpG double-stranded DNA from viruses and bacteria delivered to the cytoplasm. Acts by binding cyclic dinucleotides: recognizes and binds cyclic di-GMP (c-di-GMP), a second messenger produced by bacteria, and cyclic GMP-AMP (cGAMP), a messenger produced by CGAS in response to DNA virus in the cytosol. Upon binding of c-di-GMP or cGAMP, STING1 oligomerizes and is able to activate both NF-kappa-B and irf3 transcription pathways to induce expression of type I interferon and exert a potent anti-viral state. Exhibits 2',3' phosphodiester linkage-specific ligand recognition: can bind both 2'-3' linked cGAMP and 3'-3' linked cGAMP but is preferentially activated by 2'-3' linked cGAMP. In addition to promote the production of type I interferons, plays a direct role in autophagy. Following cGAMP-binding, STING1 buds from the endoplasmic reticulum into COPII vesicles, which then form the endoplasmic reticulum-Golgi intermediate compartment (ERGIC). The ERGIC serves as the membrane source for LC3 lipidation, leading to formation of autophagosomes that target cytosolic DNA or DNA viruses for degradation by the lysosome. Promotes autophagy by acting as a proton channel that directs proton efflux from the Golgi to facilitate LC3 lipidation. The autophagy- and interferon-inducing activities can be uncoupled and autophagy induction is independent of TBK1 phosphorylation. The sequence is that of Stimulator of interferon genes protein from Danio rerio (Zebrafish).